The sequence spans 332 residues: Probable isoaspartyl peptidase/L-asparaginase CG7860 (332 aa).

Thr-188 acts as the Nucleophile in catalysis. Residues 216–219 (RIGD) and 239–242 (TGHG) contribute to the substrate site.

Belongs to the Ntn-hydrolase family. In terms of assembly, heterodimer of an alpha and beta chain produced by autocleavage. In terms of processing, cleaved into an alpha and beta chain by autocatalysis; this activates the enzyme. The N-terminal residue of the beta subunit is responsible for the nucleophile hydrolase activity.

It carries out the reaction L-asparagine + H2O = L-aspartate + NH4(+). The catalysed reaction is Cleavage of a beta-linked Asp residue from the N-terminus of a polypeptide.. Has both L-asparaginase and beta-aspartyl peptidase activity. Does not have aspartylglucosaminidase activity and is inactive toward GlcNAc-L-Asn. Likewise, has no activity toward glutamine. This is Probable isoaspartyl peptidase/L-asparaginase CG7860 from Drosophila melanogaster (Fruit fly).